The primary structure comprises 122 residues: Acidic phospholipase A2 A' (122 aa).

7 cysteine pairs are disulfide-bonded: Cys26/Cys115, Cys28/Cys44, Cys43/Cys95, Cys49/Cys122, Cys50/Cys88, Cys57/Cys81, and Cys75/Cys86. 3 residues coordinate Ca(2+): Tyr27, Gly29, and Gly31. His47 is a catalytic residue. Residue Asp48 coordinates Ca(2+). Residue Asp89 is part of the active site.

The protein belongs to the phospholipase A2 family. Group II subfamily. D49 sub-subfamily. Ca(2+) serves as cofactor. Expressed by the venom gland.

The protein resides in the secreted. It carries out the reaction a 1,2-diacyl-sn-glycero-3-phosphocholine + H2O = a 1-acyl-sn-glycero-3-phosphocholine + a fatty acid + H(+). PLA2 catalyzes the calcium-dependent hydrolysis of the 2-acyl groups in 3-sn-phosphoglycerides. The polypeptide is Acidic phospholipase A2 A' (Gloydius halys (Chinese water mocassin)).